Consider the following 142-residue polypeptide: Large ribosomal subunit protein uL13 (142 aa).

The protein belongs to the universal ribosomal protein uL13 family. Part of the 50S ribosomal subunit.

This protein is one of the early assembly proteins of the 50S ribosomal subunit, although it is not seen to bind rRNA by itself. It is important during the early stages of 50S assembly. In Vesicomyosocius okutanii subsp. Calyptogena okutanii (strain HA), this protein is Large ribosomal subunit protein uL13.